Here is a 536-residue protein sequence, read N- to C-terminus: Formate--tetrahydrofolate ligase (536 aa).

51 to 58 (TAAGEGKT) is an ATP binding site.

Belongs to the formate--tetrahydrofolate ligase family.

It carries out the reaction (6S)-5,6,7,8-tetrahydrofolate + formate + ATP = (6R)-10-formyltetrahydrofolate + ADP + phosphate. Its pathway is one-carbon metabolism; tetrahydrofolate interconversion. This is Formate--tetrahydrofolate ligase from Thermoplasma volcanium (strain ATCC 51530 / DSM 4299 / JCM 9571 / NBRC 15438 / GSS1).